The primary structure comprises 209 residues: Uracil phosphoribosyltransferase (209 aa).

Residues Arg-79, Arg-104, and 131–139 (DPMLATGGS) each bind 5-phospho-alpha-D-ribose 1-diphosphate. Residues Ile-194 and 199-201 (GDA) contribute to the uracil site. Residue Asp-200 coordinates 5-phospho-alpha-D-ribose 1-diphosphate.

Belongs to the UPRTase family. It depends on Mg(2+) as a cofactor.

It carries out the reaction UMP + diphosphate = 5-phospho-alpha-D-ribose 1-diphosphate + uracil. It participates in pyrimidine metabolism; UMP biosynthesis via salvage pathway; UMP from uracil: step 1/1. With respect to regulation, allosterically activated by GTP. Its function is as follows. Catalyzes the conversion of uracil and 5-phospho-alpha-D-ribose 1-diphosphate (PRPP) to UMP and diphosphate. The protein is Uracil phosphoribosyltransferase of Clostridium acetobutylicum (strain ATCC 824 / DSM 792 / JCM 1419 / IAM 19013 / LMG 5710 / NBRC 13948 / NRRL B-527 / VKM B-1787 / 2291 / W).